Reading from the N-terminus, the 160-residue chain is Cytochrome b6-f complex subunit 4 (160 aa).

3 helical membrane-spanning segments follow: residues 36 to 56 (LLYI…GLAV), 95 to 115 (LLGV…PFLE), and 131 to 151 (TVFL…ALPI).

Belongs to the cytochrome b family. PetD subfamily. The 4 large subunits of the cytochrome b6-f complex are cytochrome b6, subunit IV (17 kDa polypeptide, petD), cytochrome f and the Rieske protein, while the 4 small subunits are petG, petL, petM and petN. The complex functions as a dimer.

The protein resides in the plastid. It is found in the chloroplast thylakoid membrane. Its function is as follows. Component of the cytochrome b6-f complex, which mediates electron transfer between photosystem II (PSII) and photosystem I (PSI), cyclic electron flow around PSI, and state transitions. This chain is Cytochrome b6-f complex subunit 4, found in Spirogyra maxima (Green alga).